Here is a 399-residue protein sequence, read N- to C-terminus: Tryptophan synthase beta chain (399 aa).

At Lys-92 the chain carries N6-(pyridoxal phosphate)lysine.

It belongs to the TrpB family. Tetramer of two alpha and two beta chains. It depends on pyridoxal 5'-phosphate as a cofactor.

It catalyses the reaction (1S,2R)-1-C-(indol-3-yl)glycerol 3-phosphate + L-serine = D-glyceraldehyde 3-phosphate + L-tryptophan + H2O. It participates in amino-acid biosynthesis; L-tryptophan biosynthesis; L-tryptophan from chorismate: step 5/5. Functionally, the beta subunit is responsible for the synthesis of L-tryptophan from indole and L-serine. The polypeptide is Tryptophan synthase beta chain (Legionella pneumophila subsp. pneumophila (strain Philadelphia 1 / ATCC 33152 / DSM 7513)).